Reading from the N-terminus, the 221-residue chain is Orotate phosphoribosyltransferase (221 aa).

Residue lysine 26 coordinates 5-phospho-alpha-D-ribose 1-diphosphate. Position 34 to 35 (34 to 35 (FF)) interacts with orotate. Residues 72-73 (YK), arginine 98, lysine 99, lysine 102, histidine 104, and 123-131 (DDVISAGTS) contribute to the 5-phospho-alpha-D-ribose 1-diphosphate site. Residues serine 127 and arginine 155 each contribute to the orotate site.

The protein belongs to the purine/pyrimidine phosphoribosyltransferase family. PyrE subfamily. Homodimer. Mg(2+) is required as a cofactor.

It catalyses the reaction orotidine 5'-phosphate + diphosphate = orotate + 5-phospho-alpha-D-ribose 1-diphosphate. The protein operates within pyrimidine metabolism; UMP biosynthesis via de novo pathway; UMP from orotate: step 1/2. Its function is as follows. Catalyzes the transfer of a ribosyl phosphate group from 5-phosphoribose 1-diphosphate to orotate, leading to the formation of orotidine monophosphate (OMP). This Janthinobacterium sp. (strain Marseille) (Minibacterium massiliensis) protein is Orotate phosphoribosyltransferase.